We begin with the raw amino-acid sequence, 349 residues long: Beta-hexosaminidase (349 aa).

Substrate contacts are provided by residues aspartate 64, arginine 72, arginine 138, and 168-169 (KH). Histidine 181 functions as the Proton donor/acceptor in the catalytic mechanism. Residue aspartate 252 is the Nucleophile of the active site.

Belongs to the glycosyl hydrolase 3 family. NagZ subfamily.

It localises to the cytoplasm. It catalyses the reaction Hydrolysis of terminal non-reducing N-acetyl-D-hexosamine residues in N-acetyl-beta-D-hexosaminides.. The protein operates within cell wall biogenesis; peptidoglycan recycling. In terms of biological role, plays a role in peptidoglycan recycling by cleaving the terminal beta-1,4-linked N-acetylglucosamine (GlcNAc) from peptide-linked peptidoglycan fragments, giving rise to free GlcNAc, anhydro-N-acetylmuramic acid and anhydro-N-acetylmuramic acid-linked peptides. In Nitrosospira multiformis (strain ATCC 25196 / NCIMB 11849 / C 71), this protein is Beta-hexosaminidase.